Here is a 206-residue protein sequence, read N- to C-terminus: Protein GrpE (206 aa).

The protein belongs to the GrpE family. Homodimer.

The protein resides in the cytoplasm. In terms of biological role, participates actively in the response to hyperosmotic and heat shock by preventing the aggregation of stress-denatured proteins, in association with DnaK and GrpE. It is the nucleotide exchange factor for DnaK and may function as a thermosensor. Unfolded proteins bind initially to DnaJ; upon interaction with the DnaJ-bound protein, DnaK hydrolyzes its bound ATP, resulting in the formation of a stable complex. GrpE releases ADP from DnaK; ATP binding to DnaK triggers the release of the substrate protein, thus completing the reaction cycle. Several rounds of ATP-dependent interactions between DnaJ, DnaK and GrpE are required for fully efficient folding. This Shewanella sp. (strain W3-18-1) protein is Protein GrpE.